Reading from the N-terminus, the 771-residue chain is DNA polymerase 1 (771 aa).

It belongs to the DNA polymerase type-B family.

It carries out the reaction DNA(n) + a 2'-deoxyribonucleoside 5'-triphosphate = DNA(n+1) + diphosphate. This Pyrococcus abyssi (strain GE5 / Orsay) protein is DNA polymerase 1 (polI).